The following is a 1372-amino-acid chain: MAYSYTEKKRIRKSFAELPHVMDIPYLLAIQVDSYEQFLQENKKPKARENTGLQAAFSSIFPIESNSNNAELQFVEYYLGAPEFDERECISRGSTFAAPLRVKIRLVIKDKDSKDKNSKAAIKDIREQNVYMGEIPLMTDNGTFIINGTERVIVSQLHRSPGVFFDHDKGKSHSSGKVLYNARIIPYRGSWLDFEFDAKDLVFARIDRRRKLLGTIILRALGMDTNEILDTFFEKVSVYKGEEQFEIDLVADRLRGEMAQFDIVSPDGEVLVEQGKRINARRIRQIEQSGMKKLAVPDEYLYERILAEDIVVNDEVIAKANTLIDHELLVKLSAFEASESIKEFKILFTNDIDHGTYIADTLRADSTGSREEALIEIYKVMRPGEPPTIDTAEKLFESMFFNADRYDLSNVGRMKFNRRLGRTFENTDDPDIKREQSVLTKDDIIDVLKELINIRNGIGEVDDIDHLGNRRIRSVGEMAENQFRVGLVRVERAVKERLSSAESDNLSPQDLINSKPVAAAVKEFFGSSQLSQFMDQNNPLSEITHKRRISALGPGGLTRERAGFEVRDVHNTHYGRVCPIETPEGPNIGLINSLATFAKTNEFGFLETPYRKVVDGKVTDDIEYLSAIEEVGTVIAQADSELDENGVLAEEMVMVRSGGESVRMPSDKVTHMDVSPSQVVSVAASLIPFLEHDDANRALMGSNMQRQAVPTLRADKPLVGTGMERHVARDSGVCVIARRGGVIEDVDASRIVVRVNEDEMQAGEAGIDIYNLIKYTRSNQNTCINQRIIVNQGDEIAGGDILADGPSTDLGELALGQNMRVAFMPWNGYNFEDSILLSERVVKEDRFTTIHIQELTCVARDTKLGTEEITADIPNVGEAALSALDESGIVYIGAEVDAGDILVGKVTPKGETQLTPEEKLLRAIFGEKAADVKDTSLRVPTSTKGTVIDVQVFTRDGVEKDARAKSIEKSQLDNYRKDLKEELRIFEEAARSRISHLLDGQAISGGAGLKSGTVLAESELLEMSLETLLDIQPVEEEIAERLTQIQEFLVDKQKDIDTKFAEKKRKLTAGDDLAHGVQKIVKVYLAVKRRIQPGDKMAGRHGNKGVVSRIMPVEDMPYDENGNPVDIVLNPLGVPSRMNIGQVLETHLGMAAKGLGDKINGMIKAQAAVTELREFLDKIYNKVGGEQVDLDSLSDDDIRALAQNLRDGVPMGTAVFDGAREVQIDELLELAGYPSSGQQTLYDGRTGQKFDRPVTVGYMYMLKLNHLVDDKMHARSTGSYSLVTQQPLGGKAQFGGQRFGEMEVWALEAYGATYTLQEMLTVKSDDVEGRTRMYKNIVDGEQYMDPGMPESFNVLTKEIKSLGINIELKESN.

The protein belongs to the RNA polymerase beta chain family. The RNAP catalytic core consists of 2 alpha, 1 beta, 1 beta' and 1 omega subunit. When a sigma factor is associated with the core the holoenzyme is formed, which can initiate transcription.

The catalysed reaction is RNA(n) + a ribonucleoside 5'-triphosphate = RNA(n+1) + diphosphate. Functionally, DNA-dependent RNA polymerase catalyzes the transcription of DNA into RNA using the four ribonucleoside triphosphates as substrates. The protein is DNA-directed RNA polymerase subunit beta of Psychrobacter sp. (strain PRwf-1).